The following is a 168-amino-acid chain: G/U mismatch-specific DNA glycosylase (168 aa).

Belongs to the uracil-DNA glycosylase (UDG) superfamily. TDG/mug family. As to quaternary structure, binds DNA as a monomer.

It localises to the cytoplasm. It catalyses the reaction Specifically hydrolyzes mismatched double-stranded DNA and polynucleotides, releasing free uracil.. Its function is as follows. Excises ethenocytosine and uracil, which can arise by alkylation or deamination of cytosine, respectively, from the corresponding mispairs with guanine in ds-DNA. It is capable of hydrolyzing the carbon-nitrogen bond between the sugar-phosphate backbone of the DNA and the mispaired base. The complementary strand guanine functions in substrate recognition. Required for DNA damage lesion repair in stationary-phase cells. This Citrobacter koseri (strain ATCC BAA-895 / CDC 4225-83 / SGSC4696) protein is G/U mismatch-specific DNA glycosylase.